The following is a 385-amino-acid chain: FAD-dependent monooxygenase verC2 (385 aa).

Residues R27, D227, and A240 each contribute to the FAD site. N-linked (GlcNAc...) asparagine glycosylation occurs at N320. Residues 365–385 (WKTTIMFIALLTIVVLIYSFI) traverse the membrane as a helical segment.

Belongs to the paxM FAD-dependent monooxygenase family. FAD is required as a cofactor.

Its subcellular location is the membrane. It functions in the pathway secondary metabolite biosynthesis; terpenoid biosynthesis. It participates in mycotoxin biosynthesis. In terms of biological role, FAD-dependent monooxygenase; part of the gene cluster that mediates the biosynthesis of the neurotoxin verrucosidin, a methylated alpha-pyrone polyketide that inhibits oxidative phosphorylation in mitochondria and thereby causes neurological diseases. The carbon backbone of verrucosidin is synthesized by the HR-PKS verA, and further modified by the other verrucodidin cluster enzymes. This is FAD-dependent monooxygenase verC2 from Penicillium polonicum.